The sequence spans 561 residues: uncharacterized protein (561 aa).

The span at 314 to 323 (ANNGSGDSSS) shows a compositional bias: low complexity. Residues 314–366 (ANNGSGDSSSTALNNESPNTTPKSRTFFSPKGHRRNSSHVSSLTSRSTKKPIT) form a disordered region. Over residues 324–340 (TALNNESPNTTPKSRTF) the composition is skewed to polar residues. Position 514 is a phosphoserine (serine 514).

The protein localises to the cytoplasm. This is an uncharacterized protein from Saccharomyces cerevisiae (strain ATCC 204508 / S288c) (Baker's yeast).